Here is a 148-residue protein sequence, read N- to C-terminus: Single-stranded DNA-binding protein, mitochondrial (148 aa).

The N-terminal 16 residues, 1–16, are a transit peptide targeting the mitochondrion; sequence MFRRPVLQVLRQFVRH. Residues 30-141 form the SSB domain; the sequence is LNRVHLLGRV…IIADNIIFLS (112 aa). Residues Ser-67 and Ser-79 each carry the phosphoserine modification. Lys-113 is subject to N6-acetyllysine. N6-succinyllysine is present on Lys-122.

Homotetramer. Interacts with MPG/AAG, through inhibition of its glycosylase activity it potentially prevents formation of DNA breaks in ssDNA, ensuring that base removal primarily occurs in dsDNA. Interacts with POLDIP2. Interacts with PRIMPOL.

Its subcellular location is the mitochondrion. The protein localises to the mitochondrion matrix. It is found in the mitochondrion nucleoid. Its function is as follows. Binds preferentially and cooperatively to pyrimidine rich single-stranded DNA (ss-DNA). In vitro, required to maintain the copy number of mitochondrial DNA (mtDNA) and plays a crucial role during mtDNA replication by stimulating the activity of the replisome components POLG and TWNK at the replication fork. Promotes the activity of the gamma complex polymerase POLG, largely by organizing the template DNA and eliminating secondary structures to favor ss-DNA conformations that facilitate POLG activity. In addition it is able to promote the 5'-3' unwinding activity of the mtDNA helicase TWNK. May also function in mtDNA repair. In Pongo abelii (Sumatran orangutan), this protein is Single-stranded DNA-binding protein, mitochondrial (SSBP1).